We begin with the raw amino-acid sequence, 511 residues long: Glutamate/gamma-aminobutyrate antiporter (511 aa).

Topologically, residues 1–14 are cytoplasmic; the sequence is MATLVQTGKAKQLT. The chain crosses the membrane as a helical span at residues 15–35; sequence LLGFFAITASMVMAVYEYPTF. Residues 36–41 are Periplasmic-facing; that stretch reads ATSGFS. A helical membrane pass occupies residues 42–62; it reads LVFFLLLGGILWFIPVGLCAA. Residues 63-93 are Cytoplasmic-facing; the sequence is EMATVDGWEEGGVFAWVSNTLGPRWGFAAIS. The chain crosses the membrane as a helical span at residues 94 to 114; that stretch reads FGYLQIAIGFIPMLYFVLGAL. The Periplasmic portion of the chain corresponds to 115–127; that stretch reads SYILKWPALNEDP. Residues 128-148 form a helical membrane-spanning segment; the sequence is ITKTIAALIILWALALTQFGG. Over 149–157 the chain is Cytoplasmic; it reads TKYTARIAK. The helical transmembrane segment at 158 to 178 threads the bilayer; it reads VGFFAGILLPAFILIALAAIY. Residues 179–200 lie on the Periplasmic side of the membrane; that stretch reads LHSGAPVAIEMDSKTFFPDFSK. The chain crosses the membrane as a helical span at residues 201 to 221; the sequence is VGTLVVFVAFILSYMGVEASA. Residues 222–239 are Cytoplasmic-facing; that stretch reads THVNEMSNPGRDYPLAML. Residues 240-260 traverse the membrane as a helical segment; it reads LLMVAAICLSSVGGLSIAMVI. At 261-291 the chain is on the periplasmic side; the sequence is PGNEINLSAGVMQTFTVLMSHVAPEIEWTVR. Residues 292–312 form a helical membrane-spanning segment; sequence VISALLLLGVLAEIASWIVGP. The Cytoplasmic portion of the chain corresponds to 313–335; the sequence is SRGMYVTAQKNLLPAAFAKMNKN. The chain crosses the membrane as a helical span at residues 336–356; sequence GVPVTLVISQLVITSIALIIL. The Periplasmic segment spans residues 357–366; that stretch reads TNTGGGNNMS. Residues 367–387 form a helical membrane-spanning segment; the sequence is FLIALALTVVIYLCAYFMLFI. The Cytoplasmic portion of the chain corresponds to 388–412; that stretch reads GYIVLVLKHPDLKRTFNIPGGKGVK. Residues 413–433 form a helical membrane-spanning segment; that stretch reads LVVAIVGLLTSIMAFIVSFLP. Topologically, residues 434–445 are periplasmic; it reads PDNIQGDSTDMY. Residues 446–466 form a helical membrane-spanning segment; the sequence is VELLVVSFLVVLALPFILYAV. Residues 467-511 lie on the Cytoplasmic side of the membrane; the sequence is HDRKGKANTGVTLEPINSQNAPKGHFFLHPRARSPHYIVMNDKKH.

Belongs to the amino acid-polyamine-organocation (APC) superfamily. Glutamate:GABA antiporter (GGA) (TC 2.A.3.7) family.

The protein localises to the cell inner membrane. The enzyme catalyses 4-aminobutanoate(in) + L-glutamate(out) = 4-aminobutanoate(out) + L-glutamate(in). With respect to regulation, shows pH-dependent activity. The glutamate analog L-trans-pyrrolidine-2,4-dicarboxylic acid (L-PDC) blocks the uptake of glutamate by selective inhibition. Its function is as follows. Involved in glutaminase-dependent acid resistance. Exchanges extracellular glutamate (Glu) for intracellular gamma-aminobutyric acid (GABA) under acidic conditions. The ability to survive the extremely acidic conditions of the stomach is essential for successful colonization of the host by commensal and pathogenic bacteria. The polypeptide is Glutamate/gamma-aminobutyrate antiporter (gadC) (Escherichia coli O157:H7).